Here is a 387-residue protein sequence, read N- to C-terminus: Postreplication repair E3 ubiquitin-protein ligase rad18 (387 aa).

The RING-type zinc finger occupies 29–67 (CLICHEYFRAPLITSCSHTFCSFCIRDYLREHPMCPACR). Residues 119-153 (DSASGDEEWEDDLASNSSPASIAKKTSRDSKKRKR) form a disordered region. The span at 122 to 131 (SGDEEWEDDL) shows a compositional bias: acidic residues. A UBZ4-type zinc finger spans residues 156-183 (LVHCPACSNLVPHNQINQHLDSCLNSPS). Residues cysteine 159, cysteine 162, histidine 174, and cysteine 178 each coordinate Zn(2+). Positions 174-206 (HLDSCLNSPSSPSSSSSPYKNKDNSKSNSLLSF) are disordered. Positions 177 to 192 (SCLNSPSSPSSSSSPY) are enriched in low complexity. Positions 240 to 274 (YALLSESKIRSKLSEMGLPTDGHKQLLQRRHAKWV) constitute an SAP domain. The disordered stretch occupies residues 335–387 (KQSTTNKNDSLRNTAVESSTEPSTSNGFPATSVSPPLTIDLTNSQTGSDGPQS).

The protein belongs to the RAD18 family. Interacts with E2 ubc2, forming a complex with ubiquitin ligase activity.

It is found in the nucleus. It catalyses the reaction S-ubiquitinyl-[E2 ubiquitin-conjugating enzyme]-L-cysteine + [acceptor protein]-L-lysine = [E2 ubiquitin-conjugating enzyme]-L-cysteine + N(6)-ubiquitinyl-[acceptor protein]-L-lysine.. It participates in protein modification; protein ubiquitination. In terms of biological role, E3 RING-finger protein, member of the UBC2/RAD6 epistasis group. Associates to the E2 ubiquitin conjugating enzyme ubc2/rad6 to form the ubc2-rad18 ubiquitin ligase complex involved in postreplicative repair (PRR) of damaged DNA. The protein is Postreplication repair E3 ubiquitin-protein ligase rad18 (rhp18) of Schizosaccharomyces pombe (strain 972 / ATCC 24843) (Fission yeast).